Consider the following 243-residue polypeptide: Homeobox protein goosecoid isoform B (243 aa).

Positions 148–207 form a DNA-binding region, homeobox; it reads KRRHRTIFTDEQLEALENLFQETKYPDVGTREQLARRVHLREEKVEVWFKNRRAKWRRQK. Positions 201-243 are disordered; that stretch reads AKWRRQKRSSSEESENAQKWNKSSKNSAEKRDEQAKSDLDSDS. A compositionally biased stretch (polar residues) spans 217 to 226; sequence AQKWNKSSKN. Residues 227-243 are compositionally biased toward basic and acidic residues; it reads SAEKRDEQAKSDLDSDS.

The protein belongs to the paired homeobox family. Bicoid subfamily.

It is found in the nucleus. Its function is as follows. Plays a central role in executing Spemann's organizer phenomenon (the dorsal blastopore lip of the early Xenopus laevis gastrula can organize a complete secondary body axis when transplanted to another embryo). The protein is Homeobox protein goosecoid isoform B (gsc-b) of Xenopus laevis (African clawed frog).